Consider the following 82-residue polypeptide: Protein C14 (82 aa).

This is Protein C14 from Homo sapiens (Human).